The sequence spans 514 residues: L-threonine dehydratase biosynthetic IlvA (514 aa).

At Lys62 the chain carries N6-(pyridoxal phosphate)lysine. Pyridoxal 5'-phosphate is bound by residues Asn89, 188–192 (GGGGL), and Ser315. ACT-like domains are found at residues 339–411 (ALLA…DLSD) and 434–504 (RLYS…DETN).

It belongs to the serine/threonine dehydratase family. Homotetramer. Pyridoxal 5'-phosphate is required as a cofactor.

It catalyses the reaction L-threonine = 2-oxobutanoate + NH4(+). Its pathway is amino-acid biosynthesis; L-isoleucine biosynthesis; 2-oxobutanoate from L-threonine: step 1/1. Isoleucine allosterically inhibits whereas valine allosterically activates this enzyme. Catalyzes the anaerobic formation of alpha-ketobutyrate and ammonia from threonine in a two-step reaction. The first step involved a dehydration of threonine and a production of enamine intermediates (aminocrotonate), which tautomerizes to its imine form (iminobutyrate). Both intermediates are unstable and short-lived. The second step is the nonenzymatic hydrolysis of the enamine/imine intermediates to form 2-ketobutyrate and free ammonia. In the low water environment of the cell, the second step is accelerated by RidA. This is L-threonine dehydratase biosynthetic IlvA (ilvA) from Escherichia coli (strain K12).